Consider the following 395-residue polypeptide: Endophilin-B2 (395 aa).

M1 carries the post-translational modification N-acetylmethionine. Residues 1 to 27 (MDFNMKKLASDAGIFFTRAVQFTEEKF) are membrane-binding amphipathic helix. S10 is modified (phosphoserine). The BAR domain maps to 24–287 (EEKFGQAEKT…LGRFPGTFVG (264 aa)). Coiled coils occupy residues 116–132 (IKVA…ERDF) and 206–240 (ASAL…LLLE). Residues 335-395 (SGTRKARVLY…VPVTYLELLS (61 aa)) enclose the SH3 domain. S395 bears the Phosphoserine mark.

It belongs to the endophilin family. As to quaternary structure, homodimer, and heterodimer with SH3GLB1.

It is found in the cytoplasm. The protein is Endophilin-B2 (SH3GLB2) of Bos taurus (Bovine).